The primary structure comprises 117 residues: UPF0122 protein Cthe_0771 (117 aa).

This sequence belongs to the UPF0122 family.

In terms of biological role, might take part in the signal recognition particle (SRP) pathway. This is inferred from the conservation of its genetic proximity to ftsY/ffh. May be a regulatory protein. In Acetivibrio thermocellus (strain ATCC 27405 / DSM 1237 / JCM 9322 / NBRC 103400 / NCIMB 10682 / NRRL B-4536 / VPI 7372) (Clostridium thermocellum), this protein is UPF0122 protein Cthe_0771.